The primary structure comprises 222 residues: Cytidylate kinase (222 aa).

An ATP-binding site is contributed by 11–19 (GPTASGKGT).

It belongs to the cytidylate kinase family. Type 1 subfamily.

It localises to the cytoplasm. The enzyme catalyses CMP + ATP = CDP + ADP. It catalyses the reaction dCMP + ATP = dCDP + ADP. This chain is Cytidylate kinase, found in Cupriavidus necator (strain ATCC 17699 / DSM 428 / KCTC 22496 / NCIMB 10442 / H16 / Stanier 337) (Ralstonia eutropha).